The chain runs to 405 residues: Saccharopepsin (405 aa).

Residues 1 to 22 (MFSLKALLPLALLLVSANQVAA) form the signal peptide. Residues 23–76 (KVHKAKIYKHELSDEMKEVTFEQHLAHLGQKYLTQFEKANPEVVFSREHPFFTE) constitute a propeptide, activation peptide. In terms of domain architecture, Peptidase A1 spans 91 to 402 (YYTDITLGTP…DLGNNAVGLA (312 aa)). The active site involves Asp-109. Cys-122 and Cys-127 are oxidised to a cystine. Residue Asn-144 is glycosylated (N-linked (GlcNAc...) asparagine). Residue Asp-294 is part of the active site. The cysteines at positions 328 and 361 are disulfide-linked. An N-linked (GlcNAc...) asparagine glycan is attached at Asn-345.

The protein belongs to the peptidase A1 family.

It is found in the vacuole. The catalysed reaction is Hydrolysis of proteins with broad specificity for peptide bonds. Cleaves -Leu-Leu-|-Val-Tyr- bond in a synthetic substrate. Does not act on esters of Tyr or Arg.. In terms of biological role, aspartyl protease implicated in the post-translational regulation of S.cerevisiae vacuolar proteinases. Acts on YSCB, on YSCY and on itself. The polypeptide is Saccharopepsin (PEP4) (Saccharomyces cerevisiae (strain ATCC 204508 / S288c) (Baker's yeast)).